A 412-amino-acid polypeptide reads, in one-letter code: Peptide chain release factor subunit 1 (412 aa).

The protein belongs to the eukaryotic release factor 1 family. In terms of assembly, heterodimer of two subunits, one of which binds GTP.

It localises to the cytoplasm. In terms of biological role, directs the termination of nascent peptide synthesis (translation) in response to the termination codons UAA, UAG and UGA. The sequence is that of Peptide chain release factor subunit 1 from Methanobrevibacter smithii (strain ATCC 35061 / DSM 861 / OCM 144 / PS).